A 65-amino-acid polypeptide reads, in one-letter code: Large ribosomal subunit protein bL35 (65 aa).

It belongs to the bacterial ribosomal protein bL35 family.

In Karelsulcia muelleri (strain GWSS) (Sulcia muelleri), this protein is Large ribosomal subunit protein bL35.